Consider the following 450-residue polypeptide: Bifunctional protein GlmU (450 aa).

A pyrophosphorylase region spans residues 1–229; sequence MRRHAIILAA…VEEIMGVNDR (229 aa). Residues 8 to 11, K22, Q72, and 77 to 78 contribute to the UDP-N-acetyl-alpha-D-glucosamine site; these read LAAG and GT. Position 102 (D102) interacts with Mg(2+). UDP-N-acetyl-alpha-D-glucosamine-binding residues include G139, E154, and N227. N227 is a binding site for Mg(2+). Residues 230-250 are linker; the sequence is VMLSQAEKAMQRRTNHYHMLN. The N-acetyltransferase stretch occupies residues 251–450; the sequence is GVTIIDPDST…RQTTKEGYRK (200 aa). The UDP-N-acetyl-alpha-D-glucosamine site is built by R332 and K350. H362 acts as the Proton acceptor in catalysis. Y365 and N376 together coordinate UDP-N-acetyl-alpha-D-glucosamine. Residues 385 to 386, A422, and R439 contribute to the acetyl-CoA site; that span reads NY.

In the N-terminal section; belongs to the N-acetylglucosamine-1-phosphate uridyltransferase family. The protein in the C-terminal section; belongs to the transferase hexapeptide repeat family. As to quaternary structure, homotrimer. It depends on Mg(2+) as a cofactor.

Its subcellular location is the cytoplasm. It catalyses the reaction alpha-D-glucosamine 1-phosphate + acetyl-CoA = N-acetyl-alpha-D-glucosamine 1-phosphate + CoA + H(+). The catalysed reaction is N-acetyl-alpha-D-glucosamine 1-phosphate + UTP + H(+) = UDP-N-acetyl-alpha-D-glucosamine + diphosphate. It participates in nucleotide-sugar biosynthesis; UDP-N-acetyl-alpha-D-glucosamine biosynthesis; N-acetyl-alpha-D-glucosamine 1-phosphate from alpha-D-glucosamine 6-phosphate (route II): step 2/2. The protein operates within nucleotide-sugar biosynthesis; UDP-N-acetyl-alpha-D-glucosamine biosynthesis; UDP-N-acetyl-alpha-D-glucosamine from N-acetyl-alpha-D-glucosamine 1-phosphate: step 1/1. Its pathway is bacterial outer membrane biogenesis; LPS lipid A biosynthesis. Functionally, catalyzes the last two sequential reactions in the de novo biosynthetic pathway for UDP-N-acetylglucosamine (UDP-GlcNAc). The C-terminal domain catalyzes the transfer of acetyl group from acetyl coenzyme A to glucosamine-1-phosphate (GlcN-1-P) to produce N-acetylglucosamine-1-phosphate (GlcNAc-1-P), which is converted into UDP-GlcNAc by the transfer of uridine 5-monophosphate (from uridine 5-triphosphate), a reaction catalyzed by the N-terminal domain. This chain is Bifunctional protein GlmU, found in Staphylococcus aureus (strain NCTC 8325 / PS 47).